A 595-amino-acid polypeptide reads, in one-letter code: Beta-(1--&gt;2)glucan export ATP-binding/permease protein NdvA (595 aa).

A run of 5 helical transmembrane segments spans residues 21 to 41, 56 to 76, 129 to 149, 158 to 178, and 252 to 272; these read FLLI…EPIL, LVTL…YVLV, IWLE…VLVP, LSIV…LVMQ, and ISIV…QLSV. The ABC transmembrane type-1 domain maps to 21-301; sequence FLLICTANIT…ISGFINLAVS (281 aa). Residues 335–569 enclose the ABC transporter domain; it reads IQFHHVTYEF…DGHFYKLLKA (235 aa). An ATP-binding site is contributed by 368-375; it reads GPTGAGKT.

The protein belongs to the ABC transporter superfamily. Beta-(1--&gt;2)glucan exporter (TC 3.A.1.108.1) family. As to quaternary structure, homodimer.

The protein localises to the cell inner membrane. The catalysed reaction is [(1-&gt;2)-beta-D-glucosyl](n)(in) + ATP + H2O = [(1-&gt;2)-beta-D-glucosyl](n)(out) + ADP + phosphate + H(+). Involved in beta-(1--&gt;2)glucan export. Transmembrane domains (TMD) form a pore in the inner membrane and the ATP-binding domain (NBD) is responsible for energy generation. In Bartonella bacilliformis (strain ATCC 35685 / KC583 / Herrer 020/F12,63), this protein is Beta-(1--&gt;2)glucan export ATP-binding/permease protein NdvA.